The chain runs to 173 residues: Ribosome maturation factor RimM (173 aa).

Positions 92-165 (EGEFYHADLI…RVVIEAPAEI (74 aa)) constitute a PRC barrel domain.

It belongs to the RimM family. Binds ribosomal protein uS19.

Its subcellular location is the cytoplasm. An accessory protein needed during the final step in the assembly of 30S ribosomal subunit, possibly for assembly of the head region. Essential for efficient processing of 16S rRNA. May be needed both before and after RbfA during the maturation of 16S rRNA. It has affinity for free ribosomal 30S subunits but not for 70S ribosomes. The sequence is that of Ribosome maturation factor RimM from Nitrobacter winogradskyi (strain ATCC 25391 / DSM 10237 / CIP 104748 / NCIMB 11846 / Nb-255).